A 111-amino-acid polypeptide reads, in one-letter code: uncharacterized protein (111 aa).

This is an uncharacterized protein from Saccharomyces cerevisiae (strain ATCC 204508 / S288c) (Baker's yeast).